Consider the following 864-residue polypeptide: Leucine--tRNA ligase (864 aa).

The 'HIGH' region motif lies at 42 to 52; sequence PYPSGKLHMGH. Residues 619–623 carry the 'KMSKS' region motif; that stretch reads KMSKS. Lysine 622 is a binding site for ATP.

It belongs to the class-I aminoacyl-tRNA synthetase family.

It is found in the cytoplasm. It catalyses the reaction tRNA(Leu) + L-leucine + ATP = L-leucyl-tRNA(Leu) + AMP + diphosphate. This is Leucine--tRNA ligase from Wigglesworthia glossinidia brevipalpis.